Here is a 395-residue protein sequence, read N- to C-terminus: Chorismate synthase (395 aa).

Residues Arg-40 and Arg-46 each contribute to the NADP(+) site. FMN contacts are provided by residues Arg-134–Ser-136, Gln-256–Ala-257, Gly-301, Lys-316–Thr-320, and Arg-342.

It belongs to the chorismate synthase family. In terms of assembly, homotetramer. It depends on FMNH2 as a cofactor.

The catalysed reaction is 5-O-(1-carboxyvinyl)-3-phosphoshikimate = chorismate + phosphate. Its pathway is metabolic intermediate biosynthesis; chorismate biosynthesis; chorismate from D-erythrose 4-phosphate and phosphoenolpyruvate: step 7/7. Its function is as follows. Catalyzes the anti-1,4-elimination of the C-3 phosphate and the C-6 proR hydrogen from 5-enolpyruvylshikimate-3-phosphate (EPSP) to yield chorismate, which is the branch point compound that serves as the starting substrate for the three terminal pathways of aromatic amino acid biosynthesis. This reaction introduces a second double bond into the aromatic ring system. This Beutenbergia cavernae (strain ATCC BAA-8 / DSM 12333 / CCUG 43141 / JCM 11478 / NBRC 16432 / NCIMB 13614 / HKI 0122) protein is Chorismate synthase.